A 333-amino-acid polypeptide reads, in one-letter code: Phosphate acyltransferase (333 aa).

It belongs to the PlsX family. Homodimer. Probably interacts with PlsY.

The protein localises to the cytoplasm. The enzyme catalyses a fatty acyl-[ACP] + phosphate = an acyl phosphate + holo-[ACP]. Its pathway is lipid metabolism; phospholipid metabolism. Its function is as follows. Catalyzes the reversible formation of acyl-phosphate (acyl-PO(4)) from acyl-[acyl-carrier-protein] (acyl-ACP). This enzyme utilizes acyl-ACP as fatty acyl donor, but not acyl-CoA. The protein is Phosphate acyltransferase of Lactobacillus helveticus (strain DPC 4571).